The following is a 342-amino-acid chain: Glucokinase (342 aa).

An ATP-binding site is contributed by 15-20 (GDVGGT).

It belongs to the bacterial glucokinase family.

The protein resides in the cytoplasm. It catalyses the reaction D-glucose + ATP = D-glucose 6-phosphate + ADP + H(+). This Ralstonia nicotianae (strain ATCC BAA-1114 / GMI1000) (Ralstonia solanacearum) protein is Glucokinase.